A 321-amino-acid chain; its full sequence is Lipoyl synthase (321 aa).

Residues 1-21 form a disordered region; the sequence is MRHRWEDRPVAPPPDGRPTEY. The [4Fe-4S] cluster site is built by Cys-63, Cys-68, Cys-74, Cys-89, Cys-93, Cys-96, and Ser-302. In terms of domain architecture, Radical SAM core spans 75–291; that stretch reads WNNRTATFMI…KKLGLEMGFS (217 aa). The interval 301–321 is disordered; sequence SSYHAHEQTEDARRGALGARG. Over residues 304–314 the composition is skewed to basic and acidic residues; that stretch reads HAHEQTEDARR.

It belongs to the radical SAM superfamily. Lipoyl synthase family. It depends on [4Fe-4S] cluster as a cofactor.

The protein localises to the cytoplasm. It catalyses the reaction [[Fe-S] cluster scaffold protein carrying a second [4Fe-4S](2+) cluster] + N(6)-octanoyl-L-lysyl-[protein] + 2 oxidized [2Fe-2S]-[ferredoxin] + 2 S-adenosyl-L-methionine + 4 H(+) = [[Fe-S] cluster scaffold protein] + N(6)-[(R)-dihydrolipoyl]-L-lysyl-[protein] + 4 Fe(3+) + 2 hydrogen sulfide + 2 5'-deoxyadenosine + 2 L-methionine + 2 reduced [2Fe-2S]-[ferredoxin]. The protein operates within protein modification; protein lipoylation via endogenous pathway; protein N(6)-(lipoyl)lysine from octanoyl-[acyl-carrier-protein]: step 2/2. In terms of biological role, catalyzes the radical-mediated insertion of two sulfur atoms into the C-6 and C-8 positions of the octanoyl moiety bound to the lipoyl domains of lipoate-dependent enzymes, thereby converting the octanoylated domains into lipoylated derivatives. The polypeptide is Lipoyl synthase (Rubrobacter xylanophilus (strain DSM 9941 / JCM 11954 / NBRC 16129 / PRD-1)).